The primary structure comprises 143 residues: uncharacterized protein (143 aa).

The protein belongs to the SufE family.

This is an uncharacterized protein from Mycobacterium tuberculosis (strain CDC 1551 / Oshkosh).